A 122-amino-acid chain; its full sequence is Small ribosomal subunit protein uS13 (122 aa).

A disordered region spans residues 96–122 (LPVHGQRTKTNARTRKGPARTVAGKKK).

The protein belongs to the universal ribosomal protein uS13 family. In terms of assembly, part of the 30S ribosomal subunit. Forms a loose heterodimer with protein S19. Forms two bridges to the 50S subunit in the 70S ribosome.

Functionally, located at the top of the head of the 30S subunit, it contacts several helices of the 16S rRNA. In the 70S ribosome it contacts the 23S rRNA (bridge B1a) and protein L5 of the 50S subunit (bridge B1b), connecting the 2 subunits; these bridges are implicated in subunit movement. Contacts the tRNAs in the A and P-sites. This is Small ribosomal subunit protein uS13 from Geotalea daltonii (strain DSM 22248 / JCM 15807 / FRC-32) (Geobacter daltonii).